Consider the following 100-residue polypeptide: Small ribosomal subunit protein uS14 (100 aa).

Belongs to the universal ribosomal protein uS14 family. In terms of assembly, part of the 30S ribosomal subunit. Contacts proteins S3 and S10.

Functionally, binds 16S rRNA, required for the assembly of 30S particles and may also be responsible for determining the conformation of the 16S rRNA at the A site. The protein is Small ribosomal subunit protein uS14 of Prochlorococcus marinus (strain MIT 9313).